The chain runs to 317 residues: Olfactory receptor 2G2 (317 aa).

Residues 1 to 28 (MGMVRHTNESNLAGFILLGFSDYPQLQK) are Extracellular-facing. An N-linked (GlcNAc...) asparagine glycan is attached at asparagine 8. A helical membrane pass occupies residues 29–52 (VLFVLILILYLLTILGNTTIILVS). The Cytoplasmic portion of the chain corresponds to 53 to 60 (RLEPKLHM). A helical transmembrane segment spans residues 61 to 82 (PMYFFLSHLSFLYRCFTSSVIP). The Extracellular segment spans residues 83-103 (QLLVNLWEPMKTIAYGGCLVH). Cysteines 100 and 192 form a disulfide. Residues 104–123 (LYNSHALGSTECVLPAVMSC) form a helical membrane-spanning segment. Topologically, residues 124 to 142 (DRYVAVCRPLHYTVLMHIH) are cytoplasmic. The chain crosses the membrane as a helical span at residues 143 to 161 (LCMALASMAWLSGIATTLV). At 162-198 (QSTLTLQLPFCGHRQVDHFICEVPVLIKLACVGTTFN) the chain is on the extracellular side. Residues 199-222 (EAELFVASILFLIVPVSFILVSSG) form a helical membrane-spanning segment. Topologically, residues 223-239 (YIAHAVLRIKSATRRQK) are cytoplasmic. A helical transmembrane segment spans residues 240 to 262 (AFGTCFSHLTVVTIFYGTIIFMY). At 263 to 275 (LQPAKSRSRDQGK) the chain is on the extracellular side. A helical transmembrane segment spans residues 276-295 (FVSLFYTVVTRMLNPLIYTL). The Cytoplasmic segment spans residues 296–317 (RIKEVKGALKKVLAKALGVNIL).

It belongs to the G-protein coupled receptor 1 family.

The protein localises to the cell membrane. Odorant receptor. The chain is Olfactory receptor 2G2 (OR2G2) from Homo sapiens (Human).